The primary structure comprises 252 residues: 5-oxoprolinase subunit A 1 (252 aa).

Belongs to the LamB/PxpA family. As to quaternary structure, forms a complex composed of PxpA, PxpB and PxpC.

It carries out the reaction 5-oxo-L-proline + ATP + 2 H2O = L-glutamate + ADP + phosphate + H(+). Functionally, catalyzes the cleavage of 5-oxoproline to form L-glutamate coupled to the hydrolysis of ATP to ADP and inorganic phosphate. The chain is 5-oxoprolinase subunit A 1 from Pseudomonas putida (strain ATCC 47054 / DSM 6125 / CFBP 8728 / NCIMB 11950 / KT2440).